The following is a 193-amino-acid chain: Cysteine and glycine-rich protein 1 (193 aa).

One can recognise an LIM zinc-binding 1 domain in the interval 10-61; that stretch reads CGVCQKTVYFAEEVQCEGNSFHKSCFLCMVCKKNLDSTTVAVHGEEIYCKSC. Positions 64–69 match the Nuclear localization signal motif; it reads KKYGPK. A Phosphoserine modification is found at S81. K84 is modified (N6-acetyllysine). K91 is covalently cross-linked (Glycyl lysine isopeptide (Lys-Gly) (interchain with G-Cter in SUMO2)). An N6-acetyllysine mark is found at K112, K131, K137, and K161. One can recognise an LIM zinc-binding 2 domain in the interval 119–170; that stretch reads CPRCSQAVYAAEKVIGAGKSWHKSCFRCAKCGKGLESTTLADKDGEIYCKGC. S192 bears the Phosphoserine mark.

As to quaternary structure, interacts with ASCC1; ASCC2 and TRIP4.

Its subcellular location is the nucleus. Could play a role in neuronal development. This is Cysteine and glycine-rich protein 1 (Csrp1) from Mus musculus (Mouse).